A 364-amino-acid polypeptide reads, in one-letter code: Dihydroorotate dehydrogenase (quinone) (364 aa).

FMN contacts are provided by residues 61–65 and Thr85; that span reads AGYDK. Lys65 is a binding site for substrate. Substrate is bound at residue 110–114; the sequence is NRLGF. The FMN site is built by Asn139 and Asn170. Asn170 contributes to the substrate binding site. The Nucleophile role is filled by Ser173. Substrate is bound at residue Asn175. Residues Lys215 and Ser243 each contribute to the FMN site. 244–245 provides a ligand contact to substrate; it reads NT. FMN contacts are provided by residues Gly266, Gly295, and 316 to 317; that span reads YT.

Belongs to the dihydroorotate dehydrogenase family. Type 2 subfamily. In terms of assembly, monomer. Requires FMN as cofactor.

Its subcellular location is the cell membrane. It catalyses the reaction (S)-dihydroorotate + a quinone = orotate + a quinol. Its pathway is pyrimidine metabolism; UMP biosynthesis via de novo pathway; orotate from (S)-dihydroorotate (quinone route): step 1/1. Its function is as follows. Catalyzes the conversion of dihydroorotate to orotate with quinone as electron acceptor. The protein is Dihydroorotate dehydrogenase (quinone) of Brucella anthropi (strain ATCC 49188 / DSM 6882 / CCUG 24695 / JCM 21032 / LMG 3331 / NBRC 15819 / NCTC 12168 / Alc 37) (Ochrobactrum anthropi).